The primary structure comprises 363 residues: Chorismate synthase (363 aa).

Arg48 provides a ligand contact to NADP(+). FMN contacts are provided by residues 125–127, 238–239, Gly278, 293–297, and Arg319; these read RSS, NA, and KPTAS.

This sequence belongs to the chorismate synthase family. Homotetramer. It depends on FMNH2 as a cofactor.

The enzyme catalyses 5-O-(1-carboxyvinyl)-3-phosphoshikimate = chorismate + phosphate. It participates in metabolic intermediate biosynthesis; chorismate biosynthesis; chorismate from D-erythrose 4-phosphate and phosphoenolpyruvate: step 7/7. Functionally, catalyzes the anti-1,4-elimination of the C-3 phosphate and the C-6 proR hydrogen from 5-enolpyruvylshikimate-3-phosphate (EPSP) to yield chorismate, which is the branch point compound that serves as the starting substrate for the three terminal pathways of aromatic amino acid biosynthesis. This reaction introduces a second double bond into the aromatic ring system. The sequence is that of Chorismate synthase from Acinetobacter baumannii (strain ACICU).